Here is a 604-residue protein sequence, read N- to C-terminus: Proline--tRNA ligase (604 aa).

Belongs to the class-II aminoacyl-tRNA synthetase family. ProS type 1 subfamily. As to quaternary structure, homodimer.

The protein localises to the cytoplasm. It carries out the reaction tRNA(Pro) + L-proline + ATP = L-prolyl-tRNA(Pro) + AMP + diphosphate. Its function is as follows. Catalyzes the attachment of proline to tRNA(Pro) in a two-step reaction: proline is first activated by ATP to form Pro-AMP and then transferred to the acceptor end of tRNA(Pro). As ProRS can inadvertently accommodate and process non-cognate amino acids such as alanine and cysteine, to avoid such errors it has two additional distinct editing activities against alanine. One activity is designated as 'pretransfer' editing and involves the tRNA(Pro)-independent hydrolysis of activated Ala-AMP. The other activity is designated 'posttransfer' editing and involves deacylation of mischarged Ala-tRNA(Pro). The misacylated Cys-tRNA(Pro) is not edited by ProRS. The sequence is that of Proline--tRNA ligase from Trichormus variabilis (strain ATCC 29413 / PCC 7937) (Anabaena variabilis).